Here is a 317-residue protein sequence, read N- to C-terminus: Apolipoprotein E (317 aa).

The first 18 residues, 1 to 18 (MKVLWAALLVTFLAGCQA), serve as a signal peptide directing secretion. 8 consecutive repeat copies span residues 80 to 101 (ALMD…EQLT), 102 to 123 (PVAE…ARLG), 124 to 145 (ADME…AMLG), 146 to 167 (QSTE…KRLL), 168 to 189 (RDAD…EGAE), 190 to 211 (RGVS…VRAA), 212 to 233 (TVGS…ERLR), and 234 to 255 (ARME…EQVA). The 8 X 22 AA approximate tandem repeats stretch occupies residues 80–255 (ALMDETMKEL…RLDEVKEQVA (176 aa)). At methionine 143 the chain carries Methionine sulfoxide. Serine 147 carries the phosphoserine modification. Positions 158-168 (HLRKLRKRLLR) are LDL and other lipoprotein receptors binding. 162-165 (LRKR) contacts heparin. Positions 210–290 (AATVGSVAGK…SWFEPLVEDM (81 aa)) are lipid-binding and lipoprotein association. A heparin-binding site is contributed by 229 to 236 (GERLRARM). The segment at 266-317 (QQIRLQAEAFQARLKSWFEPLVEDMQRQWAGLVEKVQAAVGTSAAPVPSDNH) is homooligomerization. Residues 278–290 (RLKSWFEPLVEDM) form a specificity for association with VLDL region.

This sequence belongs to the apolipoprotein A1/A4/E family. Homotetramer. May interact with ABCA1; functionally associated with ABCA1 in the biogenesis of HDLs. May interact with APP/A4 amyloid-beta peptide; the interaction is extremely stable in vitro but its physiological significance is unclear. May interact with MAPT. May interact with MAP2. In the cerebrospinal fluid, interacts with secreted SORL1. Interacts with PMEL; this allows the loading of PMEL luminal fragment on ILVs to induce fibril nucleation. APOE exists as multiple glycosylated and sialylated glycoforms within cells and in plasma. The extent of glycosylation and sialylation are tissue and context specific. In terms of processing, glycated in plasma VLDL. Post-translationally, phosphorylated by FAM20C in the extracellular medium.

The protein localises to the secreted. The protein resides in the extracellular space. Its subcellular location is the extracellular matrix. It is found in the extracellular vesicle. It localises to the endosome. The protein localises to the multivesicular body. Functionally, APOE is an apolipoprotein, a protein associating with lipid particles, that mainly functions in lipoprotein-mediated lipid transport between organs via the plasma and interstitial fluids. APOE is a core component of plasma lipoproteins and is involved in their production, conversion and clearance. Apolipoproteins are amphipathic molecules that interact both with lipids of the lipoprotein particle core and the aqueous environment of the plasma. As such, APOE associates with chylomicrons, chylomicron remnants, very low density lipoproteins (VLDL) and intermediate density lipoproteins (IDL) but shows a preferential binding to high-density lipoproteins (HDL). It also binds a wide range of cellular receptors including the LDL receptor/LDLR, the LDL receptor-related proteins LRP1, LRP2 and LRP8 and the very low-density lipoprotein receptor/VLDLR that mediate the cellular uptake of the APOE-containing lipoprotein particles. Finally, APOE also has a heparin-binding activity and binds heparan-sulfate proteoglycans on the surface of cells, a property that supports the capture and the receptor-mediated uptake of APOE-containing lipoproteins by cells. A main function of APOE is to mediate lipoprotein clearance through the uptake of chylomicrons, VLDLs, and HDLs by hepatocytes. APOE is also involved in the biosynthesis by the liver of VLDLs as well as their uptake by peripheral tissues ensuring the delivery of triglycerides and energy storage in muscle, heart and adipose tissues. By participating in the lipoprotein-mediated distribution of lipids among tissues, APOE plays a critical role in plasma and tissues lipid homeostasis. APOE is also involved in two steps of reverse cholesterol transport, the HDLs-mediated transport of cholesterol from peripheral tissues to the liver, and thereby plays an important role in cholesterol homeostasis. First, it is functionally associated with ABCA1 in the biogenesis of HDLs in tissues. Second, it is enriched in circulating HDLs and mediates their uptake by hepatocytes. APOE also plays an important role in lipid transport in the central nervous system, regulating neuron survival and sprouting. This is Apolipoprotein E (APOE) from Pongo pygmaeus (Bornean orangutan).